Reading from the N-terminus, the 302-residue chain is Deoxyhypusine hydroxylase (302 aa).

Met-1 carries the post-translational modification N-acetylmethionine. HEAT-like PBS-type repeat units lie at residues 54-80 (LKHE…VLQD), 87-113 (VRHE…YSTD), 175-201 (ERYR…GLQC), 206-232 (FRHE…TLAR), and 239-265 (VRHE…HIED). Positions 56, 89, and 90 each coordinate Fe cation. 3 residues coordinate Fe cation: His-208, His-241, and Glu-242.

It belongs to the deoxyhypusine hydroxylase family. It depends on Fe(2+) as a cofactor.

It carries out the reaction [eIF5A protein]-deoxyhypusine + AH2 + O2 = [eIF5A protein]-hypusine + A + H2O. The protein operates within protein modification; eIF5A hypusination. Its function is as follows. Catalyzes the hydroxylation of the N(6)-(4-aminobutyl)-L-lysine intermediate produced by deoxyhypusine synthase/DHPS on a critical lysine of the eukaryotic translation initiation factor 5A/eIF-5A. This is the second step of the post-translational modification of that lysine into an unusual amino acid residue named hypusine. Hypusination is unique to mature eIF-5A factor and is essential for its function. The polypeptide is Deoxyhypusine hydroxylase (Mus musculus (Mouse)).